The following is a 100-amino-acid chain: uncharacterized protein (100 aa).

An N-terminal signal peptide occupies residues 1–18 (MWGFLVLKARWLVTPVRT). Residues 48 to 86 (LTRGVIRVSPQERSQQNQSAPKGPTPSTRPKPRTLGPQA) are disordered. The span at 58–69 (QERSQQNQSAPK) shows a compositional bias: polar residues. Asn-64 carries an N-linked (GlcNAc...) asparagine glycan.

It is found in the secreted. This is an uncharacterized protein from Homo sapiens (Human).